The sequence spans 625 residues: Probable inactive receptor kinase At5g16590 (625 aa).

Residues 1-23 form the signal peptide; the sequence is MKNKTNLGLSVFFFFICLVSVTS. LRR repeat units follow at residues 88-111, 112-134, 136-158, 160-182, and 183-204; these read KLET…ANLT, LLRY…LFTL, NIIR…VNSA, RLAT…KIKL, and QQFN…SGMP. A helical transmembrane segment spans residues 246–266; sequence AIVGIVIGCFVLLLVLFLIVF. Residues 343 to 613 form the Protein kinase domain; the sequence is KASAEVLGKG…PEVTRLIEEV (271 aa). Serine 345 carries the post-translational modification Phosphoserine. ATP contacts are provided by residues 349–357 and lysine 371; that span reads LGKGTFGSS. Serine 422 bears the Phosphoserine mark. 2 positions are modified to phosphothreonine: threonine 442 and threonine 496. Serine 517 carries the post-translational modification Phosphoserine. The residue at position 593 (threonine 593) is a Phosphothreonine. Serine 619 and serine 624 each carry phosphoserine.

Belongs to the protein kinase superfamily. Ser/Thr protein kinase family.

Its subcellular location is the cell membrane. Functionally, might be involved in early recognition of growth promoting fungi. Appears to be specific for P.indica. This chain is Probable inactive receptor kinase At5g16590, found in Arabidopsis thaliana (Mouse-ear cress).